Consider the following 141-residue polypeptide: Large ribosomal subunit protein uL11 (141 aa).

Belongs to the universal ribosomal protein uL11 family. In terms of assembly, part of the ribosomal stalk of the 50S ribosomal subunit. Interacts with L10 and the large rRNA to form the base of the stalk. L10 forms an elongated spine to which L12 dimers bind in a sequential fashion forming a multimeric L10(L12)X complex. Post-translationally, one or more lysine residues are methylated.

Functionally, forms part of the ribosomal stalk which helps the ribosome interact with GTP-bound translation factors. The protein is Large ribosomal subunit protein uL11 of Synechococcus sp. (strain CC9902).